Consider the following 373-residue polypeptide: RNA 3'-terminal phosphate cyclase-like protein (373 aa).

Belongs to the RNA 3'-terminal cyclase family. Type 2 subfamily. As to quaternary structure, part of the small subunit (SSU) processome, composed of more than 70 proteins and the RNA chaperone small nucleolar RNA (snoRNA) U3. Interacts with BMS1.

Its subcellular location is the nucleus. The protein resides in the nucleolus. In terms of biological role, as part of the small subunit (SSU) processome, it plays a role in 40S-ribosomal-subunit biogenesis in the early pre-rRNA processing steps at sites A0, A1 and A2 that are required for proper maturation of the 18S RNA. Activates BMS1 by promoting GDP/GTP exchange. Does not have cyclase activity. This chain is RNA 3'-terminal phosphate cyclase-like protein (Rcl1), found in Mus musculus (Mouse).